Reading from the N-terminus, the 521-residue chain is Type II methyltransferase M.AluI (521 aa).

Positions 8-491 (YSFVDLFAGI…REHVRRDRAL (484 aa)) constitute an SAM-dependent MTase C5-type domain. C84 is a catalytic residue.

It belongs to the class I-like SAM-binding methyltransferase superfamily. C5-methyltransferase family.

It catalyses the reaction a 2'-deoxycytidine in DNA + S-adenosyl-L-methionine = a 5-methyl-2'-deoxycytidine in DNA + S-adenosyl-L-homocysteine + H(+). Its function is as follows. A methylase, recognizes the double-stranded sequence 5'-AGCT-3', methylates C-3 on both strands, and protects the DNA from cleavage by the AluI endonuclease. This Cellulosimicrobium cellulans (Arthrobacter luteus) protein is Type II methyltransferase M.AluI.